The sequence spans 283 residues: MRCSAVSLGSGTIINAIATGFGSAFGVDLKIKADVELVDNGKKIINGISIDNPTLKPSLVERCVKNVLNYFEVDYSAKISTNGDIPIKSGLSSSSAASNAAVLATIGALGEKVDSDLVLDLAIKSSFEEKLTVTGAYDDATASYFGGITVCNNMERKILKKDEFKEDIKVIVLMPEFEKNVDVNRMKLIKDYVDMAFEKCIAGDYYKALFLNGLLYSSALNFPSNISVDALEAGAITAGLSGTGPSYVALCYSEDEKNVENALKKYGNTVITKPSTNGARILY.

86–96 is an ATP binding site; sequence PIKSGLSSSSA.

This sequence belongs to the GHMP kinase family. Archaeal shikimate kinase subfamily.

It localises to the cytoplasm. It catalyses the reaction shikimate + ATP = 3-phosphoshikimate + ADP + H(+). It participates in metabolic intermediate biosynthesis; chorismate biosynthesis; chorismate from D-erythrose 4-phosphate and phosphoenolpyruvate: step 5/7. In Methanococcus maripaludis (strain C6 / ATCC BAA-1332), this protein is Shikimate kinase.